A 240-amino-acid polypeptide reads, in one-letter code: MVNGRETLDLTPFAGPPGNVAAWRISDALVDYAEATAFMEARAAAIAAHQAEELVWLLEHPPVYTSGTSGKPEDLRDPRFPFIATGRGGQVTYHGPGQRVAYVMLDLKRRRPDVRAYVAALEETIIRTLDAFNVRGERREDRVGVWVKRPDKGEGHEDKIAAIGVRLKRWVTFHGIAINVEPDLSHFQAIVPCGVTDPRYGVTSLVDLGLPVTMADVDVALRQAFESVFGATRAILPETA.

In terms of domain architecture, BPL/LPL catalytic spans 49–233 (HQAEELVWLL…AFESVFGATR (185 aa)). Residues 87–94 (RGGQVTYH), 162–164 (AIG), and 175–177 (GIA) each bind substrate. The Acyl-thioester intermediate role is filled by Cys193.

The protein belongs to the LipB family.

Its subcellular location is the cytoplasm. It carries out the reaction octanoyl-[ACP] + L-lysyl-[protein] = N(6)-octanoyl-L-lysyl-[protein] + holo-[ACP] + H(+). It functions in the pathway protein modification; protein lipoylation via endogenous pathway; protein N(6)-(lipoyl)lysine from octanoyl-[acyl-carrier-protein]: step 1/2. Functionally, catalyzes the transfer of endogenously produced octanoic acid from octanoyl-acyl-carrier-protein onto the lipoyl domains of lipoate-dependent enzymes. Lipoyl-ACP can also act as a substrate although octanoyl-ACP is likely to be the physiological substrate. The polypeptide is Octanoyltransferase (Bradyrhizobium sp. (strain ORS 278)).